The following is a 168-amino-acid chain: Small ribosomal subunit protein uS8 (168 aa).

Positions 59–93 (EEYKKMKELAEKSPNPKMKRYLKQLEEYNKGTQYP) are not found in other S8 sequences.

The protein belongs to the universal ribosomal protein uS8 family. As to quaternary structure, part of the 30S ribosomal subunit. Contacts proteins S5 and S12.

In terms of biological role, one of the primary rRNA binding proteins, it binds directly to 16S rRNA central domain where it helps coordinate assembly of the platform of the 30S subunit. This Aquifex aeolicus (strain VF5) protein is Small ribosomal subunit protein uS8.